Consider the following 73-residue polypeptide: Bacterioferritin-associated ferredoxin (73 aa).

Residues Cys-4 and Cys-6 each contribute to the [2Fe-2S] cluster site. Residues Arg-26 and Arg-29 each contribute to the phosphate site. The [2Fe-2S] cluster site is built by Cys-38 and Cys-41. Position 46 (Lys-46) interacts with phosphate.

The protein belongs to the Bfd family. As to quaternary structure, monomer. Interacts with BfrB; up to 12 Bfd proteins can bind to the BfrB bacterioferritin complex (BFR). One Bfd protein binds to a BfrB dimer in the BFR, with the [2Fe-2S] cluster positioned about 22 Angstroms above the heme of BfrB. Does not interact with FtnA. It depends on [2Fe-2S] cluster as a cofactor. Phosphate is required as a cofactor.

Its function is as follows. Required for mobilization of iron from the bacterioferritin (BFR) complex, composed of BfrB and FtnA in varying proportions; mobilization requires the [2Fe-2S] cluster of this protein. Reduction of the BfrB heme group occurs in the presence of Bfd, strongly suggesting that the BfrB-Bfd complex allows heme to mediate electron transfer from FPR to the Fe(3+) iron core in the BFR prior to its release as Fe(2+). In Pseudomonas aeruginosa (strain ATCC 15692 / DSM 22644 / CIP 104116 / JCM 14847 / LMG 12228 / 1C / PRS 101 / PAO1), this protein is Bacterioferritin-associated ferredoxin.